The following is a 372-amino-acid chain: Chaperone protein DnaJ (372 aa).

The region spanning 5–69 is the J domain; sequence DYYEVLGVSK…DKRKQYDQFG (65 aa). The CR-type zinc finger occupies 139–221; it reads GVDKIIELDL…CKGKGKYLER (83 aa). C152, C155, C169, C172, C195, C198, C209, and C212 together coordinate Zn(2+). CXXCXGXG motif repeat units follow at residues 152 to 159, 169 to 176, 195 to 202, and 209 to 216; these read CSVCFGSG, CNNCHGTG, CNVCNGAG, and CKNCKGKG.

It belongs to the DnaJ family. In terms of assembly, homodimer. Requires Zn(2+) as cofactor.

The protein localises to the cytoplasm. Functionally, participates actively in the response to hyperosmotic and heat shock by preventing the aggregation of stress-denatured proteins and by disaggregating proteins, also in an autonomous, DnaK-independent fashion. Unfolded proteins bind initially to DnaJ; upon interaction with the DnaJ-bound protein, DnaK hydrolyzes its bound ATP, resulting in the formation of a stable complex. GrpE releases ADP from DnaK; ATP binding to DnaK triggers the release of the substrate protein, thus completing the reaction cycle. Several rounds of ATP-dependent interactions between DnaJ, DnaK and GrpE are required for fully efficient folding. Also involved, together with DnaK and GrpE, in the DNA replication of plasmids through activation of initiation proteins. In Mycoplasma mycoides subsp. mycoides SC (strain CCUG 32753 / NCTC 10114 / PG1), this protein is Chaperone protein DnaJ.